Consider the following 281-residue polypeptide: Bifunctional protein FolD (281 aa).

Residues 167–169 and Ser192 contribute to the NADP(+) site; that span reads GRS.

Belongs to the tetrahydrofolate dehydrogenase/cyclohydrolase family. As to quaternary structure, homodimer.

The catalysed reaction is (6R)-5,10-methylene-5,6,7,8-tetrahydrofolate + NADP(+) = (6R)-5,10-methenyltetrahydrofolate + NADPH. The enzyme catalyses (6R)-5,10-methenyltetrahydrofolate + H2O = (6R)-10-formyltetrahydrofolate + H(+). It participates in one-carbon metabolism; tetrahydrofolate interconversion. Catalyzes the oxidation of 5,10-methylenetetrahydrofolate to 5,10-methenyltetrahydrofolate and then the hydrolysis of 5,10-methenyltetrahydrofolate to 10-formyltetrahydrofolate. The chain is Bifunctional protein FolD from Alcanivorax borkumensis (strain ATCC 700651 / DSM 11573 / NCIMB 13689 / SK2).